Here is a 400-residue protein sequence, read N- to C-terminus: Large envelope protein (400 aa).

M1 bears the N-acetylmethionine mark. Disordered stretches follow at residues 1–42 (MGGY…NNPD) and 84–118 (ILTT…SHPQ). G2 carries N-myristoyl glycine; by host lipidation. Residues 2-119 (GGYSSKPRKG…PPLRDSHPQA (118 aa)) are pre-S1. The pre-S stretch occupies residues 2 to 174 (GGYSSKPRKG…FSRTGDPVPK (173 aa)). Residues 2–181 (GGYSSKPRKG…VPKMENTTSG (180 aa)) are Virion surface; in external conformation-facing. Residues 2 to 253 (GGYSSKPRKG…PGYRWMCLRR (252 aa)) lie on the Intravirion; in internal conformation side of the membrane. An N-linked (GlcNAc...) asparagine glycan is attached at Y4. A pre-S2 region spans residues 120-174 (MQWNSTTFHQALLDPRVRGLYFPAGGSSSGTANPVPTTASPISSIFSRTGDPVPK). Residues 182-202 (FLGPLLVLQAGFFLLTRILTI) form a helical membrane-spanning segment. Topologically, residues 203 to 253 (PQSLDSWWTSLNFLGGAPACPGQNSQSPTSNHSPTSCPPICPGYRWMCLRR) are intravirion; in external conformation. A helical membrane pass occupies residues 254-274 (FIIFLFILLLCLIFLLVLLDY). The Virion surface portion of the chain corresponds to 275–348 (QGMLPVCPLI…WASVRFSWLS (74 aa)). A glycan (N-linked (GlcNAc...) asparagine; by host) is linked at N320. A helical membrane pass occupies residues 349 to 369 (LLAPFVQWFVGLSPTVWLSVI). The Intravirion segment spans residues 370–375 (WMMWYW). The chain crosses the membrane as a helical span at residues 376 to 398 (GPSLYNILSPFLPLLPIFFCLWV). Over 399–400 (YI) the chain is Virion surface.

The protein belongs to the orthohepadnavirus major surface antigen family. In its internal form (Li-HBsAg), interacts with the capsid protein and with the isoform S. Interacts with host chaperone CANX. In terms of assembly, associates with host chaperone CANX through its pre-S2 N glycan; this association may be essential for isoform M proper secretion. As to quaternary structure, interacts with isoform L. Interacts with the antigens of satellite virus HDV (HDVAgs); this interaction is required for encapsidation of HDV genomic RNA. Post-translationally, isoform M is N-terminally acetylated by host at a ratio of 90%, and N-glycosylated by host at the pre-S2 region. In terms of processing, myristoylated.

It localises to the virion membrane. Functionally, the large envelope protein exists in two topological conformations, one which is termed 'external' or Le-HBsAg and the other 'internal' or Li-HBsAg. In its external conformation the protein attaches the virus to cell receptors and thereby initiating infection. This interaction determines the species specificity and liver tropism. This attachment induces virion internalization predominantly through caveolin-mediated endocytosis. The large envelope protein also assures fusion between virion membrane and endosomal membrane. In its internal conformation the protein plays a role in virion morphogenesis and mediates the contact with the nucleocapsid like a matrix protein. The middle envelope protein plays an important role in the budding of the virion. It is involved in the induction of budding in a nucleocapsid independent way. In this process the majority of envelope proteins bud to form subviral lipoprotein particles of 22 nm of diameter that do not contain a nucleocapsid. The polypeptide is Large envelope protein (Homo sapiens (Human)).